We begin with the raw amino-acid sequence, 236 residues long: Small ribosomal subunit protein uS3 (236 aa).

The KH type-2 domain maps to 39–107; it reads IRSYVMEELK…ETSLNIVEIR (69 aa). The tract at residues 214 to 236 is disordered; that stretch reads ASEHRATRNDNSSSSLNRRRESV.

The protein belongs to the universal ribosomal protein uS3 family. As to quaternary structure, part of the 30S ribosomal subunit. Forms a tight complex with proteins S10 and S14.

In terms of biological role, binds the lower part of the 30S subunit head. Binds mRNA in the 70S ribosome, positioning it for translation. The chain is Small ribosomal subunit protein uS3 from Bartonella bacilliformis (strain ATCC 35685 / KC583 / Herrer 020/F12,63).